A 357-amino-acid polypeptide reads, in one-letter code: Aurora kinase A- and ninein-interacting protein (357 aa).

A compositionally biased stretch (polar residues) spans 72–93 (TSQQGKTNGADQRSVSSHTESQ). The segment at 72-102 (TSQQGKTNGADQRSVSSHTESQTNKESKEDA) is disordered. The interaction with AURKA stretch occupies residues 189-357 (QKEGEDSSCE…EGNQVIRHQA (169 aa)). Residues 281–357 (KDSWSQLFTE…EGNQVIRHQA (77 aa)) form an interaction with RBBP8/CtIP region. Phosphoserine is present on S292.

The protein belongs to the AUNIP family. Interacts (via C-terminus) with AURKA (via C-terminus). Interacts (via N-terminus) with NIN; this interaction blocks NIN phosphorylation by both AURKA and GSK3B. Identified in a complex with NIN and AURKA. Interacts with RBBP8/CtIP.

It localises to the nucleus. Its subcellular location is the chromosome. The protein resides in the cytoplasm. The protein localises to the cytoskeleton. It is found in the microtubule organizing center. It localises to the centrosome. Its subcellular location is the spindle pole. In terms of biological role, DNA-binding protein that accumulates at DNA double-strand breaks (DSBs) following DNA damage and promotes DNA resection and homologous recombination. Serves as a sensor of DNA damage: binds DNA with a strong preference for DNA substrates that mimic structures generated at stalled replication forks, and anchors RBBP8/CtIP to DSB sites to promote DNA end resection and ensuing homologous recombination repair. Inhibits non-homologous end joining (NHEJ). Required for the dynamic movement of AURKA at the centrosomes and spindle apparatus during the cell cycle. This Bos taurus (Bovine) protein is Aurora kinase A- and ninein-interacting protein.